Reading from the N-terminus, the 124-residue chain is MMSTATETMTDLDSIPPVMTLTQNAADKIASLIEEEGSDDLKLRVFVTGGGCSGFQYGFTFDENMNEGDTEVHQLGVSLLIDPMSYQYLVGAEIDYSEGLEGAQFVIKNPNATTTCGCGSSFSA.

Cys52, Cys116, and Cys118 together coordinate iron-sulfur cluster.

It belongs to the HesB/IscA family. As to quaternary structure, homodimer. It depends on iron-sulfur cluster as a cofactor.

Required for insertion of 4Fe-4S clusters for at least IspG. In Acidithiobacillus ferrooxidans (strain ATCC 23270 / DSM 14882 / CIP 104768 / NCIMB 8455) (Ferrobacillus ferrooxidans (strain ATCC 23270)), this protein is Iron-sulfur cluster insertion protein ErpA.